The primary structure comprises 364 residues: Dihydroorotate dehydrogenase (quinone) (364 aa).

FMN-binding positions include 61-65 (AGFDK) and Ser-85. Lys-65 lines the substrate pocket. 110 to 114 (NRMGF) provides a ligand contact to substrate. FMN contacts are provided by Asn-139 and Asn-170. Asn-170 is a substrate binding site. Ser-173 (nucleophile) is an active-site residue. Asn-175 serves as a coordination point for substrate. Residues Lys-214 and Ser-242 each contribute to the FMN site. 243-244 (NT) provides a ligand contact to substrate. Residues Gly-266, Gly-295, and 316-317 (YS) contribute to the FMN site.

It belongs to the dihydroorotate dehydrogenase family. Type 2 subfamily. Monomer. The cofactor is FMN.

The protein resides in the cell membrane. It carries out the reaction (S)-dihydroorotate + a quinone = orotate + a quinol. The protein operates within pyrimidine metabolism; UMP biosynthesis via de novo pathway; orotate from (S)-dihydroorotate (quinone route): step 1/1. Its function is as follows. Catalyzes the conversion of dihydroorotate to orotate with quinone as electron acceptor. This chain is Dihydroorotate dehydrogenase (quinone), found in Bradyrhizobium sp. (strain ORS 278).